A 785-amino-acid polypeptide reads, in one-letter code: Cadherin-7 (785 aa).

A signal peptide spans 1-27 (MKLGKVEFCHFLQLIALFLCFSGMSQA). Positions 28 to 47 (ELSRSRSKPYFQSGRSRTKR) are excised as a propeptide. Residues 28–607 (ELSRSRSKPY…AYVLPAGLST (580 aa)) are Extracellular-facing. 5 Cadherin domains span residues 49-153 (WVWN…EPKF), 154-262 (LDGP…PPRF), 263-377 (PRRS…PPVF), 378-482 (SSPL…APEF), and 482-599 (FAMD…AEAY). Residues asparagine 449 and asparagine 530 are each glycosylated (N-linked (GlcNAc...) asparagine). The chain crosses the membrane as a helical span at residues 608–628 (GALIAILACVLTLLVLILLIV). Residues 629-785 (TMRRRKKEPL…YGTGQESLYS (157 aa)) lie on the Cytoplasmic side of the membrane.

The protein resides in the cell membrane. Functionally, cadherins are calcium-dependent cell adhesion proteins. They preferentially interact with themselves in a homophilic manner in connecting cells; cadherins may thus contribute to the sorting of heterogeneous cell types. The sequence is that of Cadherin-7 (CDH7) from Homo sapiens (Human).